Reading from the N-terminus, the 87-residue chain is Keratin-associated protein 19-1 (87 aa).

A 21 X 2 AA repeats of G-[YCGS] region spans residues 6-72; it reads GYSGGLGYGY…SSYGGYGCGC (67 aa).

It belongs to the KRTAP type 19 family. In terms of assembly, interacts with hair keratins. In terms of tissue distribution, strong expression in narrowly defined pattern restricted to the lower and middle cortical regions of the hair shaft in both developing and cycling hair. During hair follicle regression (catagen), expression levels decrease until expression is no longer detectable in follicles at resting stage (telogen).

Its function is as follows. In the hair cortex, hair keratin intermediate filaments are embedded in an interfilamentous matrix, consisting of hair keratin-associated proteins (KRTAP), which are essential for the formation of a rigid and resistant hair shaft through their extensive disulfide bond cross-linking with abundant cysteine residues of hair keratins. The matrix proteins include the high-sulfur and high-glycine-tyrosine keratins. The polypeptide is Keratin-associated protein 19-1 (Krtap19-1) (Mus musculus (Mouse)).